A 274-amino-acid chain; its full sequence is UPF0758 protein RHECIAT_CH0001935 (274 aa).

Positions 1–57 (MAKRPAATSSNDELPFATEEPVADERSFFGGRPQNPTAPNARAALPASLSGPEHYHG) are disordered. An MPN domain is found at 152 to 274 (VLSSWSSVIQ…HVSLKGLKLI (123 aa)). Zn(2+) contacts are provided by H223, H225, and D236. Positions 223 to 236 (HNHPSGDPTPSRAD) match the JAMM motif motif.

The protein belongs to the UPF0758 family.

This is UPF0758 protein RHECIAT_CH0001935 from Rhizobium etli (strain CIAT 652).